Consider the following 281-residue polypeptide: Phosphatidylglycerol--prolipoprotein diacylglyceryl transferase (281 aa).

The next 7 membrane-spanning stretches (helical) occupy residues 11-31 (IIFTIGPVSARWYGFMYVISF), 57-77 (LLYAIFLGSCIGGRIGYIIFY), 89-109 (VFYIWEGGMSFHGGLIGAIIV), 121-141 (ILEISDFITPLIPFGLGAGRI), 194-214 (PTQLYEFFLEGILLFFIIYFF), 222-242 (GSISGLFLIFYGLFRIFIEFF), and 255-275 (IITMGQILSLPMIIAGLIIMY). R140 contributes to the a 1,2-diacyl-sn-glycero-3-phospho-(1'-sn-glycerol) binding site.

The protein belongs to the Lgt family.

It localises to the cell inner membrane. The catalysed reaction is L-cysteinyl-[prolipoprotein] + a 1,2-diacyl-sn-glycero-3-phospho-(1'-sn-glycerol) = an S-1,2-diacyl-sn-glyceryl-L-cysteinyl-[prolipoprotein] + sn-glycerol 1-phosphate + H(+). The protein operates within protein modification; lipoprotein biosynthesis (diacylglyceryl transfer). Catalyzes the transfer of the diacylglyceryl group from phosphatidylglycerol to the sulfhydryl group of the N-terminal cysteine of a prolipoprotein, the first step in the formation of mature lipoproteins. In Buchnera aphidicola subsp. Acyrthosiphon pisum (strain Tuc7), this protein is Phosphatidylglycerol--prolipoprotein diacylglyceryl transferase.